A 553-amino-acid polypeptide reads, in one-letter code: Glutamine--tRNA ligase (553 aa).

Residues 34-44 (PEPNGYLHIGH) carry the 'HIGH' region motif. Residues 35–37 (EPN) and 41–47 (HIGHAKS) each bind ATP. Positions 68 and 213 each coordinate L-glutamine. Residues T232 and 262 to 263 (RL) contribute to the ATP site. Residues 269–273 (LTSKR) carry the 'KMSKS' region motif.

The protein belongs to the class-I aminoacyl-tRNA synthetase family. Monomer.

The protein resides in the cytoplasm. It catalyses the reaction tRNA(Gln) + L-glutamine + ATP = L-glutaminyl-tRNA(Gln) + AMP + diphosphate. The polypeptide is Glutamine--tRNA ligase (Psychromonas ingrahamii (strain DSM 17664 / CCUG 51855 / 37)).